Here is a 466-residue protein sequence, read N- to C-terminus: Cysteine--tRNA ligase (466 aa).

Cysteine 27 provides a ligand contact to Zn(2+). The 'HIGH' region motif lies at 29-39 (PTVYDDAHLGH). Zn(2+)-binding residues include cysteine 208, histidine 238, and glutamate 242. Residues 270-274 (KMSKS) carry the 'KMSKS' region motif. Lysine 273 is an ATP binding site.

Belongs to the class-I aminoacyl-tRNA synthetase family. Monomer. Zn(2+) is required as a cofactor.

It localises to the cytoplasm. The catalysed reaction is tRNA(Cys) + L-cysteine + ATP = L-cysteinyl-tRNA(Cys) + AMP + diphosphate. The polypeptide is Cysteine--tRNA ligase (Sulfurimonas denitrificans (strain ATCC 33889 / DSM 1251) (Thiomicrospira denitrificans (strain ATCC 33889 / DSM 1251))).